The chain runs to 56 residues: Large ribosomal subunit protein bL33 (56 aa).

It belongs to the bacterial ribosomal protein bL33 family.

This is Large ribosomal subunit protein bL33 from Nocardioides sp. (strain ATCC BAA-499 / JS614).